Reading from the N-terminus, the 235-residue chain is Ubiquinone/menaquinone biosynthesis C-methyltransferase UbiE (235 aa).

Thr59, Asp84, and Ser123 together coordinate S-adenosyl-L-methionine.

The protein belongs to the class I-like SAM-binding methyltransferase superfamily. MenG/UbiE family.

The enzyme catalyses a 2-demethylmenaquinol + S-adenosyl-L-methionine = a menaquinol + S-adenosyl-L-homocysteine + H(+). The catalysed reaction is a 2-methoxy-6-(all-trans-polyprenyl)benzene-1,4-diol + S-adenosyl-L-methionine = a 5-methoxy-2-methyl-3-(all-trans-polyprenyl)benzene-1,4-diol + S-adenosyl-L-homocysteine + H(+). It participates in quinol/quinone metabolism; menaquinone biosynthesis; menaquinol from 1,4-dihydroxy-2-naphthoate: step 2/2. Its pathway is cofactor biosynthesis; ubiquinone biosynthesis. Functionally, methyltransferase required for the conversion of demethylmenaquinol (DMKH2) to menaquinol (MKH2) and the conversion of 2-polyprenyl-6-methoxy-1,4-benzoquinol (DDMQH2) to 2-polyprenyl-3-methyl-6-methoxy-1,4-benzoquinol (DMQH2). The chain is Ubiquinone/menaquinone biosynthesis C-methyltransferase UbiE from Campylobacter jejuni subsp. jejuni serotype O:2 (strain ATCC 700819 / NCTC 11168).